We begin with the raw amino-acid sequence, 309 residues long: Branched-chain-amino-acid aminotransferase (309 aa).

N6-(pyridoxal phosphate)lysine is present on Lys160.

This sequence belongs to the class-IV pyridoxal-phosphate-dependent aminotransferase family. Homohexamer. It depends on pyridoxal 5'-phosphate as a cofactor.

It carries out the reaction L-leucine + 2-oxoglutarate = 4-methyl-2-oxopentanoate + L-glutamate. The enzyme catalyses L-isoleucine + 2-oxoglutarate = (S)-3-methyl-2-oxopentanoate + L-glutamate. The catalysed reaction is L-valine + 2-oxoglutarate = 3-methyl-2-oxobutanoate + L-glutamate. Its pathway is amino-acid biosynthesis; L-isoleucine biosynthesis; L-isoleucine from 2-oxobutanoate: step 4/4. It functions in the pathway amino-acid biosynthesis; L-leucine biosynthesis; L-leucine from 3-methyl-2-oxobutanoate: step 4/4. It participates in amino-acid biosynthesis; L-valine biosynthesis; L-valine from pyruvate: step 4/4. Its function is as follows. Acts on leucine, isoleucine and valine. The polypeptide is Branched-chain-amino-acid aminotransferase (ilvE) (Salmonella typhi).